The primary structure comprises 176 residues: 3-hydroxyanthranilate 3,4-dioxygenase (176 aa).

Residue R44 participates in O2 binding. Positions 48, 54, and 92 each coordinate Fe cation. E54 is a binding site for substrate. R96 and E106 together coordinate substrate. Residues C121, C124, C158, and C161 each contribute to the Fe cation site.

The protein belongs to the 3-HAO family. As to quaternary structure, homodimer. It depends on Fe(2+) as a cofactor.

The catalysed reaction is 3-hydroxyanthranilate + O2 = (2Z,4Z)-2-amino-3-carboxymuconate 6-semialdehyde. It functions in the pathway cofactor biosynthesis; NAD(+) biosynthesis; quinolinate from L-kynurenine: step 3/3. Functionally, catalyzes the oxidative ring opening of 3-hydroxyanthranilate to 2-amino-3-carboxymuconate semialdehyde, which spontaneously cyclizes to quinolinate. The chain is 3-hydroxyanthranilate 3,4-dioxygenase from Xanthomonas campestris pv. campestris (strain B100).